Reading from the N-terminus, the 353-residue chain is Probable butyrate kinase (353 aa).

It belongs to the acetokinase family.

The protein localises to the cytoplasm. It carries out the reaction butanoate + ATP = butanoyl phosphate + ADP. The sequence is that of Probable butyrate kinase from Bacteroides thetaiotaomicron (strain ATCC 29148 / DSM 2079 / JCM 5827 / CCUG 10774 / NCTC 10582 / VPI-5482 / E50).